Reading from the N-terminus, the 211-residue chain is Large ribosomal subunit protein uL3 (211 aa).

Position 150 is an N5-methylglutamine (Gln-150).

The protein belongs to the universal ribosomal protein uL3 family. Part of the 50S ribosomal subunit. Forms a cluster with proteins L14 and L19. Methylated by PrmB.

In terms of biological role, one of the primary rRNA binding proteins, it binds directly near the 3'-end of the 23S rRNA, where it nucleates assembly of the 50S subunit. The chain is Large ribosomal subunit protein uL3 from Pseudomonas entomophila (strain L48).